We begin with the raw amino-acid sequence, 340 residues long: DNA-directed RNA polymerase subunit alpha (340 aa).

The alpha N-terminal domain (alpha-NTD) stretch occupies residues 1-236 (MLSLSKNWNT…EQLQLFISFE (236 aa)). Positions 246-340 (TDALPFSPYL…LSNRYEDSYN (95 aa)) are alpha C-terminal domain (alpha-CTD).

The protein belongs to the RNA polymerase alpha chain family. As to quaternary structure, homodimer. The RNAP catalytic core consists of 2 alpha, 1 beta, 1 beta' and 1 omega subunit. When a sigma factor is associated with the core the holoenzyme is formed, which can initiate transcription.

The enzyme catalyses RNA(n) + a ribonucleoside 5'-triphosphate = RNA(n+1) + diphosphate. In terms of biological role, DNA-dependent RNA polymerase catalyzes the transcription of DNA into RNA using the four ribonucleoside triphosphates as substrates. The polypeptide is DNA-directed RNA polymerase subunit alpha (Rickettsia felis (strain ATCC VR-1525 / URRWXCal2) (Rickettsia azadi)).